A 352-amino-acid polypeptide reads, in one-letter code: Nicotinate-nucleotide--dimethylbenzimidazole phosphoribosyltransferase (352 aa).

The active-site Proton acceptor is the glutamate 316.

This sequence belongs to the CobT family.

The catalysed reaction is 5,6-dimethylbenzimidazole + nicotinate beta-D-ribonucleotide = alpha-ribazole 5'-phosphate + nicotinate + H(+). The protein operates within nucleoside biosynthesis; alpha-ribazole biosynthesis; alpha-ribazole from 5,6-dimethylbenzimidazole: step 1/2. Catalyzes the synthesis of alpha-ribazole-5'-phosphate from nicotinate mononucleotide (NAMN) and 5,6-dimethylbenzimidazole (DMB). In Yersinia enterocolitica serotype O:8 / biotype 1B (strain NCTC 13174 / 8081), this protein is Nicotinate-nucleotide--dimethylbenzimidazole phosphoribosyltransferase.